The chain runs to 508 residues: GMP synthase [glutamine-hydrolyzing] (508 aa).

A Glutamine amidotransferase type-1 domain is found at 1 to 189 (MILVLDFGSQ…ALLVCGCEKT (189 aa)). The active-site Nucleophile is the cysteine 78. Catalysis depends on residues histidine 163 and glutamate 165. A GMPS ATP-PPase domain is found at 190–383 (WGMQHFAQKE…LGISQDFLMR (194 aa)). 217 to 223 (SGGVDST) lines the ATP pocket.

Homodimer.

It catalyses the reaction XMP + L-glutamine + ATP + H2O = GMP + L-glutamate + AMP + diphosphate + 2 H(+). It functions in the pathway purine metabolism; GMP biosynthesis; GMP from XMP (L-Gln route): step 1/1. In terms of biological role, catalyzes the synthesis of GMP from XMP. The chain is GMP synthase [glutamine-hydrolyzing] from Helicobacter pylori (strain Shi470).